A 346-amino-acid chain; its full sequence is Dihydroorotate dehydrogenase (quinone) (346 aa).

Residues 62–66 (AGMDK) and T86 each bind FMN. K66 is a binding site for substrate. Substrate is bound at residue 111 to 115 (NRMGF). Residues N142 and N175 each coordinate FMN. N175 lines the substrate pocket. Residue S178 is the Nucleophile of the active site. N180 serves as a coordination point for substrate. The FMN site is built by K211 and V239. Residue 240-241 (NT) coordinates substrate. Residues G261, G289, and 310 to 311 (YT) contribute to the FMN site.

This sequence belongs to the dihydroorotate dehydrogenase family. Type 2 subfamily. Monomer. The cofactor is FMN.

Its subcellular location is the cell membrane. It catalyses the reaction (S)-dihydroorotate + a quinone = orotate + a quinol. It functions in the pathway pyrimidine metabolism; UMP biosynthesis via de novo pathway; orotate from (S)-dihydroorotate (quinone route): step 1/1. Its function is as follows. Catalyzes the conversion of dihydroorotate to orotate with quinone as electron acceptor. This is Dihydroorotate dehydrogenase (quinone) from Thermus thermophilus (strain ATCC BAA-163 / DSM 7039 / HB27).